The chain runs to 84 residues: UPF0473 protein CLJ_B2791 (84 aa).

Belongs to the UPF0473 family.

This is UPF0473 protein CLJ_B2791 from Clostridium botulinum (strain 657 / Type Ba4).